Here is a 181-residue protein sequence, read N- to C-terminus: SecB-like chaperone Rv1957 (181 aa).

An N-acetylthreonine modification is found at Thr-2.

This sequence belongs to the SecB-like family. In terms of assembly, homotetramer, interacts with antitoxin HigA1.

In terms of biological role, chaperone component of an atypical, type II toxin-antitoxin chaperone (TAC) system. Prevents antitoxin HigA1 aggregation in vitro at a 1:3 chaperone:antitoxin ratio, probably also protects antitoxin HigA1 from protease. Required for neutralization of toxin HigB1 upon ectopic expression in Mycobacterium marinum or E.coli. When expressed in E.coli complements a secB deletion, restores export of OmpA and MBP and inhibits aggregation of proOmpC although it is less efficient than endogenous SecB. Complements the general chaperone function of E.coli SecB less well. This Mycobacterium tuberculosis (strain ATCC 25618 / H37Rv) protein is SecB-like chaperone Rv1957 (secBL).